The primary structure comprises 217 residues: Elongation factor Ts (217 aa).

Positions 82–85 (TDFV) are involved in Mg(2+) ion dislocation from EF-Tu.

Belongs to the EF-Ts family.

It is found in the cytoplasm. Its function is as follows. Associates with the EF-Tu.GDP complex and induces the exchange of GDP to GTP. It remains bound to the aminoacyl-tRNA.EF-Tu.GTP complex up to the GTP hydrolysis stage on the ribosome. This chain is Elongation factor Ts, found in Prochlorococcus marinus (strain SARG / CCMP1375 / SS120).